Consider the following 128-residue polypeptide: Ribonuclease P protein component (128 aa).

The protein belongs to the RnpA family. Consists of a catalytic RNA component (M1 or rnpB) and a protein subunit.

It catalyses the reaction Endonucleolytic cleavage of RNA, removing 5'-extranucleotides from tRNA precursor.. Its function is as follows. RNaseP catalyzes the removal of the 5'-leader sequence from pre-tRNA to produce the mature 5'-terminus. It can also cleave other RNA substrates such as 4.5S RNA. The protein component plays an auxiliary but essential role in vivo by binding to the 5'-leader sequence and broadening the substrate specificity of the ribozyme. The protein is Ribonuclease P protein component of Mycoplasma genitalium (strain ATCC 33530 / DSM 19775 / NCTC 10195 / G37) (Mycoplasmoides genitalium).